The chain runs to 1141 residues: Myosin-binding protein C, fast-type (1141 aa).

The interval 1–62 (MPEAKPAAKK…VFLKKPDSVS (62 aa)) is disordered. Positions 13-39 (KGKDAPKGAPKEAPPKEAPAEAPKEAP) are enriched in basic and acidic residues. Ig-like C2-type domains are found at residues 50 to 153 (PTGV…NIDV), 255 to 344 (SAAF…VKEP), 345 to 437 (PVLI…VEEK), 438 to 538 (QLEV…KQEP), and 539 to 638 (PKIH…VVDV). 2 consecutive Fibronectin type-III domains span residues 641–737 (PPEA…IAPT) and 739–834 (EPLH…IREI). The Ig-like C2-type 6 domain occupies 838-932 (PKIRLPRHLR…ATIRIRVVEK (95 aa)). The Fibronectin type-III 3 domain occupies 935 to 1030 (PPINVMVKEV…SKNTARILKT (96 aa)). The Ig-like C2-type 7 domain maps to 1048–1141 (PKFLTPLIDR…ECKLEVRVPQ (94 aa)).

It belongs to the immunoglobulin superfamily. MyBP family.

Thick filament-associated protein located in the crossbridge region of vertebrate striated muscle a bands. In vitro it binds MHC, F-actin and native thin filaments, and modifies the activity of actin-activated myosin ATPase. It may modulate muscle contraction or may play a more structural role. The protein is Myosin-binding protein C, fast-type (MYBPC2) of Homo sapiens (Human).